The sequence spans 435 residues: NADH-quinone oxidoreductase subunit D (435 aa).

The protein belongs to the complex I 49 kDa subunit family. As to quaternary structure, NDH-1 is composed of 14 different subunits. Subunits NuoB, C, D, E, F, and G constitute the peripheral sector of the complex.

It localises to the cell inner membrane. The catalysed reaction is a quinone + NADH + 5 H(+)(in) = a quinol + NAD(+) + 4 H(+)(out). Its function is as follows. NDH-1 shuttles electrons from NADH, via FMN and iron-sulfur (Fe-S) centers, to quinones in the respiratory chain. The immediate electron acceptor for the enzyme in this species is believed to be ubiquinone. Couples the redox reaction to proton translocation (for every two electrons transferred, four hydrogen ions are translocated across the cytoplasmic membrane), and thus conserves the redox energy in a proton gradient. The chain is NADH-quinone oxidoreductase subunit D from Xanthomonas axonopodis pv. citri (strain 306).